We begin with the raw amino-acid sequence, 68 residues long: Guanine nucleotide-binding protein G(I)/G(S)/G(O) subunit gamma-5B (68 aa).

The G protein gamma domain maps to 3–68 (GFSSVAATKK…FRPQKVCSFL (66 aa)). Position 65 is a cysteine methyl ester (cysteine 65). Residue cysteine 65 is the site of S-geranylgeranyl cysteine attachment. Residues 66–68 (SFL) constitute a propeptide, removed in mature form.

Belongs to the G protein gamma family. As to quaternary structure, g proteins are composed of 3 units; alpha, beta and gamma.

The protein localises to the cell membrane. Guanine nucleotide-binding proteins (G proteins) are involved as a modulator or transducer in various transmembrane signaling systems. The beta and gamma chains are required for the GTPase activity, for replacement of GDP by GTP, and for G protein-effector interaction. The sequence is that of Guanine nucleotide-binding protein G(I)/G(S)/G(O) subunit gamma-5B from Homo sapiens (Human).